The following is a 224-amino-acid chain: Deoxyribose-phosphate aldolase (224 aa).

Aspartate 93 acts as the Proton donor/acceptor in catalysis. The active-site Schiff-base intermediate with acetaldehyde is lysine 159. Lysine 189 serves as the catalytic Proton donor/acceptor.

This sequence belongs to the DeoC/FbaB aldolase family. DeoC type 1 subfamily.

It localises to the cytoplasm. The catalysed reaction is 2-deoxy-D-ribose 5-phosphate = D-glyceraldehyde 3-phosphate + acetaldehyde. It participates in carbohydrate degradation; 2-deoxy-D-ribose 1-phosphate degradation; D-glyceraldehyde 3-phosphate and acetaldehyde from 2-deoxy-alpha-D-ribose 1-phosphate: step 2/2. Functionally, catalyzes a reversible aldol reaction between acetaldehyde and D-glyceraldehyde 3-phosphate to generate 2-deoxy-D-ribose 5-phosphate. This chain is Deoxyribose-phosphate aldolase, found in Mycobacterium bovis (strain ATCC BAA-935 / AF2122/97).